The following is a 124-amino-acid chain: Large ribosomal subunit protein uL18 (124 aa).

The protein belongs to the universal ribosomal protein uL18 family. In terms of assembly, part of the 50S ribosomal subunit; part of the 5S rRNA/L5/L18/L25 subcomplex. Contacts the 5S and 23S rRNAs.

This is one of the proteins that bind and probably mediate the attachment of the 5S RNA into the large ribosomal subunit, where it forms part of the central protuberance. The chain is Large ribosomal subunit protein uL18 from Thermomicrobium roseum (strain ATCC 27502 / DSM 5159 / P-2).